We begin with the raw amino-acid sequence, 179 residues long: Large ribosomal subunit protein uL6 (179 aa).

It belongs to the universal ribosomal protein uL6 family. As to quaternary structure, part of the 50S ribosomal subunit.

Its function is as follows. This protein binds to the 23S rRNA, and is important in its secondary structure. It is located near the subunit interface in the base of the L7/L12 stalk, and near the tRNA binding site of the peptidyltransferase center. The chain is Large ribosomal subunit protein uL6 from Rhodococcus jostii (strain RHA1).